We begin with the raw amino-acid sequence, 494 residues long: MFKFALALTLCLAGASLSLAQHNPQWWGSRNTIVHLFEWKWSDIAEECETFLAPRGFAGVQVSPVNENIISAGRPWWERYQPISYKLTTRSGNEEEFADMVRRCNDVGIRIYVDVLLNHMSGDFDGVAVGTAGTEAEPSKKSFPGVPYTAQDFHPSCEITDWNNRFQVQECELVGLKDLNQHSDYVRSKLIEFLDHLIELGVAGFRVDAAKHMAAEDLEYIYGSLSNLNIEHGFPHNARPFIFQEVIDHGHETVSRDEYNELGAVTEFRFSEEIGKAFRGNNALKWLQSWGSDWGFLNSEQALTFVDNHDNQRDHGSVLNYKSPKQYKMATAFHLAYPYGISRVMSSFAFDDHDTPPPQDAQENIISPEFDEDGACVNGWICEHRWRQIYAMVGFKNAVRDTELSGWWDNGDNQISFCRGNNGFLAVNNNLYDLSQELNTCLPAGEYCDVISGSLIDGACTGKSVTVNEHGYGYIHIGSDEFDGVLALHVNAKL.

A signal peptide spans 1–20 (MFKFALALTLCLAGASLSLA). Gln-21 carries the pyrrolidone carboxylic acid modification. A disulfide bridge links Cys-48 with Cys-104. Positions 118, 169, and 178 each coordinate Ca(2+). The cysteines at positions 157 and 171 are disulfide-linked. Arg-206 is a chloride binding site. Catalysis depends on Asp-208, which acts as the Nucleophile. His-212 contributes to the Ca(2+) binding site. Glu-245 functions as the Proton donor in the catalytic mechanism. 2 residues coordinate chloride: Asn-308 and Arg-343. Intrachain disulfides connect Cys-376–Cys-382, Cys-418–Cys-441, and Cys-448–Cys-460.

It belongs to the glycosyl hydrolase 13 family. Monomer. Ca(2+) serves as cofactor. It depends on chloride as a cofactor.

Its subcellular location is the secreted. The enzyme catalyses Endohydrolysis of (1-&gt;4)-alpha-D-glucosidic linkages in polysaccharides containing three or more (1-&gt;4)-alpha-linked D-glucose units.. This chain is Alpha-amylase-related protein (Amyrel), found in Drosophila dossoui (Fruit fly).